Here is a 411-residue protein sequence, read N- to C-terminus: Serpin A3-1 (411 aa).

An N-terminal signal peptide occupies residues 1-24 (MRAERTSFLLALGLLVAGIRSVHC). Asn-100, Asn-180, Asn-230, and Asn-264 each carry an N-linked (GlcNAc...) asparagine glycan.

The protein belongs to the serpin family. In terms of assembly, homodimer. In terms of processing, N-glycosylated. As to expression, detected in all tissues examined (at protein level). Abundantly expressed in liver, kidney and spleen. Lowest levels were observed in diaphragm muscle.

The protein localises to the cytoplasmic vesicle. Its subcellular location is the secretory vesicle. It is found in the chromaffin granule. It localises to the secreted. In terms of biological role, potent inhibitor of the serine proteases elastase and trypsin. Moderately inhibits the serine proteases plasmin and chymotrypsin, and the thiol protease proenkephalin-processing enzyme. Does not inhibit the serine proteases cathepsin G, furin, kallikrein, thrombin, tissue plasminogen activator and urokinase, or the cysteine proteases cathepsin B, cathepsin L and papain. This chain is Serpin A3-1, found in Bos taurus (Bovine).